Reading from the N-terminus, the 147-residue chain is Large ribosomal subunit protein uL15 (147 aa).

Positions 1 to 15 (MKLHELKPAKGAVKE) are enriched in basic and acidic residues. The tract at residues 1–47 (MKLHELKPAKGAVKEVKRKGRGRATGNGKTAGRGHNGQNSRSGGGVR) is disordered. Residues 23-35 (RATGNGKTAGRGH) are compositionally biased toward gly residues.

Belongs to the universal ribosomal protein uL15 family. In terms of assembly, part of the 50S ribosomal subunit.

Functionally, binds to the 23S rRNA. The protein is Large ribosomal subunit protein uL15 of Alkaliphilus metalliredigens (strain QYMF).